The chain runs to 345 residues: Tetraacyldisaccharide 4'-kinase (345 aa).

61–68 (TAGGTGKT) serves as a coordination point for ATP.

Belongs to the LpxK family.

The catalysed reaction is a lipid A disaccharide + ATP = a lipid IVA + ADP + H(+). It participates in glycolipid biosynthesis; lipid IV(A) biosynthesis; lipid IV(A) from (3R)-3-hydroxytetradecanoyl-[acyl-carrier-protein] and UDP-N-acetyl-alpha-D-glucosamine: step 6/6. In terms of biological role, transfers the gamma-phosphate of ATP to the 4'-position of a tetraacyldisaccharide 1-phosphate intermediate (termed DS-1-P) to form tetraacyldisaccharide 1,4'-bis-phosphate (lipid IVA). This chain is Tetraacyldisaccharide 4'-kinase, found in Xanthomonas euvesicatoria pv. vesicatoria (strain 85-10) (Xanthomonas campestris pv. vesicatoria).